A 167-amino-acid chain; its full sequence is UPF0254 protein MJ1251 (167 aa).

Belongs to the UPF0254 family.

This Methanocaldococcus jannaschii (strain ATCC 43067 / DSM 2661 / JAL-1 / JCM 10045 / NBRC 100440) (Methanococcus jannaschii) protein is UPF0254 protein MJ1251.